Reading from the N-terminus, the 497-residue chain is Malonate-semialdehyde dehydrogenase (497 aa).

NAD(+) contacts are provided by phenylalanine 148, lysine 172, glutamate 175, arginine 176, and serine 225. Residue cysteine 280 is the Nucleophile of the active site. Glutamate 382 is a binding site for NAD(+).

The protein belongs to the aldehyde dehydrogenase family.

It carries out the reaction 3-oxopropanoate + NAD(+) + CoA + H2O = hydrogencarbonate + acetyl-CoA + NADH + H(+). Functionally, involved in the degradation of beta-alanine. Likely catalyzes the NAD(+)- and CoA-dependent oxidative decarboxylation of malonate semialdehyde (3-oxopropanoate) to acetyl-CoA. The protein is Malonate-semialdehyde dehydrogenase of Pseudomonas aeruginosa (strain ATCC 15692 / DSM 22644 / CIP 104116 / JCM 14847 / LMG 12228 / 1C / PRS 101 / PAO1).